The following is a 431-amino-acid chain: Probable ganciclovir kinase (431 aa).

The Protein kinase domain maps to 79–368 (PQEDAVLGSG…KLSIGIDSFG (290 aa)). ATP-binding positions include 85–93 (LGSGSFGSV) and K103. Residue D195 is the Proton acceptor of the active site.

Belongs to the protein kinase superfamily. Tyr protein kinase family. HCMV ganciclovir subfamily.

Functionally, phosphorylates the antiviral nucleoside analog ganciclovir. The sequence is that of Probable ganciclovir kinase (36) from Saimiriine herpesvirus 2 (strain 11) (SaHV-2).